A 1152-amino-acid polypeptide reads, in one-letter code: DNA-directed RNA polymerase subunit beta (1152 aa).

The protein belongs to the RNA polymerase beta chain family. As to quaternary structure, the RNAP catalytic core consists of 2 alpha, 1 beta, 1 beta' and 1 omega subunit. When a sigma factor is associated with the core the holoenzyme is formed, which can initiate transcription.

The enzyme catalyses RNA(n) + a ribonucleoside 5'-triphosphate = RNA(n+1) + diphosphate. In terms of biological role, DNA-dependent RNA polymerase catalyzes the transcription of DNA into RNA using the four ribonucleoside triphosphates as substrates. This Deinococcus geothermalis (strain DSM 11300 / CIP 105573 / AG-3a) protein is DNA-directed RNA polymerase subunit beta.